The following is a 71-amino-acid chain: uncharacterized protein (71 aa).

A signal peptide spans 1 to 19; sequence MFLFPSLLSSFCITLRSIS.

This is an uncharacterized protein from Pasteurella multocida (strain Pm70).